The chain runs to 740 residues: MAAFSEMGVMPEIAQAVEEMDWLLPTDIQAESIPLILGGGDVLMAAETGSGKTGAFSIPVIQIVYETLKDQQEGKKGKTTIKTGASVLNKWQMNPYDRGSAFAIGSDGLCCQSREVKEWHGCRATKGLMKGKHYYEVSCHDQGLCRVGWSTMQASLDLGTDKFGFGFGGTGKKSHNKQFDNYGEEFTMHDTIGCYLDIDKGHVKFSKNGKDLGLAFEIPPHMKNQALFPACVLKNAELKFNFGEEEFKFPPKDGFVALSKAPDGYIVKSQHSGNAQVTQTKFLPNAPKALIVEPSRELAEQTLNNIKQFKKYIDNPKLRELLIIGGVAARDQLSVLENGVDIVVGTPGRLDDLVSTGKLNLSQVRFLVLDEADGLLTQGYSDFINRMHNQIPQVTSDGKRLQVIVCSATLHSFDVKKLSEKIMHFPTWVDLKGEDSVPDTVHHVVVPVNPKTDRLWERLGKNHIRTDDVHAKDNTRPGANSPEMWSEAIKILKGEYAVRAIKEHKMDQAIIFCRTKIDCDNLEQYFMQQGGGPDKKGHQFSCVCLHGDRKPHERKQNLERFKKGDVRFLICTDVAARGIDIHGVPYVINVTLPDEKQNYVHRIGRVGRAERMGLAISLVATEKEKVWYHVCSSRGKGCYNTRLKEDGGCTIWYNEMQLLSEIEEHLNCTISQVEPDIKVPVDEFDGKVTYGQKRAAGGGSYKGHVDILAPTVQELAALEKEAQTSFLHLGYLPNQLFRTF.

Residues 1–295 are necessary for interaction with HNRNPK; that stretch reads MAAFSEMGVM…APKALIVEPS (295 aa). The segment at 1–448 is interaction with dsRNA; it reads MAAFSEMGVM…DTVHHVVVPV (448 aa). The interval 1–525 is necessary for interaction with RELA; the sequence is MAAFSEMGVM…KIDCDNLEQY (525 aa). Positions 2 to 428 constitute a Helicase ATP-binding domain; it reads AAFSEMGVMP…SEKIMHFPTW (427 aa). 46–53 is an ATP binding site; sequence AETGSGKT. A B30.2/SPRY domain is found at 70-247; it reads DQQEGKKGKT…LKFNFGEEEF (178 aa). Residues lysine 239 and lysine 268 each carry the N6-acetyllysine modification. An N6-acetyllysine; alternate modification is found at lysine 281. Lysine 281 is covalently cross-linked (Glycyl lysine isopeptide (Lys-Gly) (interchain with G-Cter in SUMO2); alternate). The short motif at 370-373 is the DEAD box element; that stretch reads DEAD. Position 481 is a phosphoserine (serine 481). Positions 493–681 constitute a Helicase C-terminal domain; that stretch reads KGEYAVRAIK…QVEPDIKVPV (189 aa). Residues 525 to 740 are necessary for interaction with HNRNPK; the sequence is YFMQQGGGPD…YLPNQLFRTF (216 aa).

It belongs to the DEAD box helicase family. DDX1 subfamily. As to quaternary structure, found in a multi-helicase-TICAM1 complex at least composed of DHX36, DDX1, DDX21 and TICAM1; this complex exists in resting cells with or without poly(I:C) RNA ligand stimulation. Interacts with DHX36. Interacts (via B30.2/SPRY domain) with DDX21 (via N-terminus); this interaction serves as bridges to TICAM1. Interacts with FAM98A (via N- and C-terminus). Interacts with PHF5A (via C-terminus). Interacts with MBNL1. Interacts with CSTF2. Interacts with HNRNPK. Interacts with ATM. Interacts with RELA (via C-terminus). Component of the tRNA-splicing ligase complex. Interacts with PQBP1. Interacts with ERCC6. Phosphorylated by ATM kinase; phosphorylation is increased in response to ionizing radiation (IR).

The protein localises to the nucleus. It is found in the cytoplasm. The protein resides in the cytoplasmic granule. Its subcellular location is the cytosol. It localises to the mitochondrion. The catalysed reaction is ATP + H2O = ADP + phosphate + H(+). Acts as an ATP-dependent RNA helicase, able to unwind both RNA-RNA and RNA-DNA duplexes. Possesses 5' single-stranded RNA overhang nuclease activity. Possesses ATPase activity on various RNA, but not DNA polynucleotides. May play a role in RNA clearance at DNA double-strand breaks (DSBs), thereby facilitating the template-guided repair of transcriptionally active regions of the genome. Together with RELA, acts as a coactivator to enhance NF-kappa-B-mediated transcriptional activation. Acts as a positive transcriptional regulator of cyclin CCND2 expression. Binds to the cyclin CCND2 promoter region. Associates with chromatin at the NF-kappa-B promoter region via association with RELA. Binds to poly(A) RNA. May be involved in 3'-end cleavage and polyadenylation of pre-mRNAs. Component of the tRNA-splicing ligase complex required to facilitate the enzymatic turnover of catalytic subunit RTCB: together with archease (ZBTB8OS), acts by facilitating the guanylylation of RTCB, a key intermediate step in tRNA ligation. Component of a multi-helicase-TICAM1 complex that acts as a cytoplasmic sensor of viral double-stranded RNA (dsRNA) and plays a role in the activation of a cascade of antiviral responses including the induction of pro-inflammatory cytokines via the adapter molecule TICAM1. Specifically binds (via helicase ATP-binding domain) on both short and long poly(I:C) dsRNA. This Macaca fascicularis (Crab-eating macaque) protein is ATP-dependent RNA helicase DDX1 (DDX1).